Reading from the N-terminus, the 596-residue chain is Elongation factor 4 (596 aa).

The tr-type G domain maps to lysine 2–valine 184. GTP is bound by residues aspartate 14 to threonine 19 and asparagine 131 to aspartate 134.

The protein belongs to the TRAFAC class translation factor GTPase superfamily. Classic translation factor GTPase family. LepA subfamily.

The protein resides in the cell inner membrane. The enzyme catalyses GTP + H2O = GDP + phosphate + H(+). Functionally, required for accurate and efficient protein synthesis under certain stress conditions. May act as a fidelity factor of the translation reaction, by catalyzing a one-codon backward translocation of tRNAs on improperly translocated ribosomes. Back-translocation proceeds from a post-translocation (POST) complex to a pre-translocation (PRE) complex, thus giving elongation factor G a second chance to translocate the tRNAs correctly. Binds to ribosomes in a GTP-dependent manner. The protein is Elongation factor 4 of Pseudoalteromonas translucida (strain TAC 125).